The primary structure comprises 287 residues: tRNA-cytidine(32) 2-sulfurtransferase (287 aa).

Positions Ser39–Ser44 match the PP-loop motif motif. Residues Cys114, Cys117, and Cys205 each contribute to the [4Fe-4S] cluster site.

The protein belongs to the TtcA family. Homodimer. Requires Mg(2+) as cofactor. It depends on [4Fe-4S] cluster as a cofactor.

The protein localises to the cytoplasm. It catalyses the reaction cytidine(32) in tRNA + S-sulfanyl-L-cysteinyl-[cysteine desulfurase] + AH2 + ATP = 2-thiocytidine(32) in tRNA + L-cysteinyl-[cysteine desulfurase] + A + AMP + diphosphate + H(+). The protein operates within tRNA modification. Its function is as follows. Catalyzes the ATP-dependent 2-thiolation of cytidine in position 32 of tRNA, to form 2-thiocytidine (s(2)C32). The sulfur atoms are provided by the cysteine/cysteine desulfurase (IscS) system. The protein is tRNA-cytidine(32) 2-sulfurtransferase of Dechloromonas aromatica (strain RCB).